The primary structure comprises 234 residues: Two-component response regulator ARR9 (234 aa).

Positions 10–147 constitute a Response regulatory domain; that stretch reads HVLAVDDSLF…DLNKLKPHMM (138 aa). Asp80 carries the post-translational modification 4-aspartylphosphate.

It belongs to the ARR family. Type-A subfamily. Interacts with AHP1 and AHP3. Post-translationally, two-component system major event consists of a His-to-Asp phosphorelay between a sensor histidine kinase (HK) and a response regulator (RR). In plants, the His-to-Asp phosphorelay involves an additional intermediate named Histidine-containing phosphotransfer protein (HPt). This multistep phosphorelay consists of a His-Asp-His-Asp sequential transfer of a phosphate group between first a His and an Asp of the HK protein, followed by the transfer to a conserved His of the HPt protein and finally the transfer to an Asp in the receiver domain of the RR protein. Predominantly expressed in roots.

It localises to the nucleus. Functions as a response regulator involved in His-to-Asp phosphorelay signal transduction system. Phosphorylation of the Asp residue in the receiver domain activates the ability of the protein to promote the transcription of target genes. Type-A response regulators seem to act as negative regulators of the cytokinin signaling. The protein is Two-component response regulator ARR9 (ARR9) of Arabidopsis thaliana (Mouse-ear cress).